Here is a 487-residue protein sequence, read N- to C-terminus: FAD-dependent oxidoreductase domain-containing protein 1 (487 aa).

Residues 62 to 82 (EQADVVIIGGGILGLSVAFWL) form a helical membrane-spanning segment.

As to quaternary structure, associates with components of the mitochondrial respiratory chain complex I. FAD serves as cofactor.

The protein localises to the mitochondrion inner membrane. Its function is as follows. Required for the assembly of the mitochondrial membrane respiratory chain NADH dehydrogenase (Complex I). Involved in mid-late stages of complex I assembly. The chain is FAD-dependent oxidoreductase domain-containing protein 1 (Foxred1) from Mus musculus (Mouse).